The primary structure comprises 146 residues: Bradykinin-like neuropeptide (146 aa).

The first 24 residues, 1–24 (MTSSIYGFITLSVVALISQTTCRS), serve as a signal peptide directing secretion. 2 consecutive propeptides follow at residues 25–80 (LDLL…LMEA) and 92–146 (LRSY…FRYG).

Neuron L5.

It is found in the secreted. May have important functions in renal physiology and in animal behavior, as does bradykinin. The polypeptide is Bradykinin-like neuropeptide (LUQ-1) (Aplysia californica (California sea hare)).